The chain runs to 604 residues: Glutamine--fructose-6-phosphate aminotransferase [isomerizing] (604 aa).

Cys-2 functions as the Nucleophile; for GATase activity in the catalytic mechanism. The 218-residue stretch at 2 to 219 (CGIMGAVSER…EGDSACVTTQ (218 aa)) folds into the Glutamine amidotransferase type-2 domain. SIS domains are found at residues 279-427 (LRAS…DNRA) and 454-594 (LASL…VDQP). Lys-599 functions as the For Fru-6P isomerization activity in the catalytic mechanism.

In terms of assembly, homodimer.

It localises to the cytoplasm. It carries out the reaction D-fructose 6-phosphate + L-glutamine = D-glucosamine 6-phosphate + L-glutamate. Its function is as follows. Catalyzes the first step in hexosamine metabolism, converting fructose-6P into glucosamine-6P using glutamine as a nitrogen source. This is Glutamine--fructose-6-phosphate aminotransferase [isomerizing] from Legionella pneumophila subsp. pneumophila (strain Philadelphia 1 / ATCC 33152 / DSM 7513).